The chain runs to 564 residues: Dihydropyrimidinase-related protein 5 (564 aa).

Phosphothreonine occurs at positions 509 and 514. Phosphoserine is present on residues S532 and S538. An Omega-N-methylarginine modification is found at R559.

The protein belongs to the metallo-dependent hydrolases superfamily. Hydantoinase/dihydropyrimidinase family. As to quaternary structure, homotetramer, and heterotetramer with other DPYS-like proteins. Interacts with DPYSL2, DPYSL3 and DPYSL4. Interacts with SEPTIN4 isoform 4. Interacts with MAP2 and TUBB3. As to expression, detected in brain.

The protein localises to the cytoplasm. Functionally, involved in the negative regulation of dendrite outgrowth. In Mus musculus (Mouse), this protein is Dihydropyrimidinase-related protein 5 (Dpysl5).